The sequence spans 448 residues: Chromosomal replication initiator protein DnaA (448 aa).

Residues 1–85 (MHDNLPQIWE…EVHIVVPSEE (85 aa)) form a domain I, interacts with DnaA modulators region. Residues 85–110 (ERVGDTQNINARRSNAQSPIMGNSPL) form a domain II region. Residues 111–327 (ILNPKYTFDT…GALIRIVAYS (217 aa)) form a domain III, AAA+ region region. Residues G155, G157, K158, and T159 each coordinate ATP. Residues 328–448 (SLTNSEVTVE…DAIIKELKSD (121 aa)) are domain IV, binds dsDNA.

It belongs to the DnaA family. In terms of assembly, oligomerizes as a right-handed, spiral filament on DNA at oriC.

Its subcellular location is the cytoplasm. In terms of biological role, plays an essential role in the initiation and regulation of chromosomal replication. ATP-DnaA binds to the origin of replication (oriC) to initiate formation of the DNA replication initiation complex once per cell cycle. Binds the DnaA box (a 9 base pair repeat at the origin) and separates the double-stranded (ds)DNA. Forms a right-handed helical filament on oriC DNA; dsDNA binds to the exterior of the filament while single-stranded (ss)DNA is stabiized in the filament's interior. The ATP-DnaA-oriC complex binds and stabilizes one strand of the AT-rich DNA unwinding element (DUE), permitting loading of DNA polymerase. After initiation quickly degrades to an ADP-DnaA complex that is not apt for DNA replication. Binds acidic phospholipids. The protein is Chromosomal replication initiator protein DnaA of Alkaliphilus metalliredigens (strain QYMF).